Consider the following 398-residue polypeptide: Bifunctional enzyme IspD/IspF (398 aa).

The interval 1 to 234 (MPSSKRTAAI…ARLAAALGDI (234 aa)) is 2-C-methyl-D-erythritol 4-phosphate cytidylyltransferase. Residues 235-398 (RTGTGYDVHA…LPWNDKGRDT (164 aa)) form a 2-C-methyl-D-erythritol 2,4-cyclodiphosphate synthase region. A divalent metal cation contacts are provided by aspartate 241 and histidine 243. 4-CDP-2-C-methyl-D-erythritol 2-phosphate is bound by residues 241-243 (DVH) and 267-268 (HS). Histidine 275 is an a divalent metal cation binding site. 4-CDP-2-C-methyl-D-erythritol 2-phosphate-binding positions include 289–291 (DIG), 365–368 (TTSE), phenylalanine 372, and arginine 375.

This sequence in the N-terminal section; belongs to the IspD/TarI cytidylyltransferase family. IspD subfamily. It in the C-terminal section; belongs to the IspF family. A divalent metal cation is required as a cofactor.

The enzyme catalyses 2-C-methyl-D-erythritol 4-phosphate + CTP + H(+) = 4-CDP-2-C-methyl-D-erythritol + diphosphate. It carries out the reaction 4-CDP-2-C-methyl-D-erythritol 2-phosphate = 2-C-methyl-D-erythritol 2,4-cyclic diphosphate + CMP. It participates in isoprenoid biosynthesis; isopentenyl diphosphate biosynthesis via DXP pathway; isopentenyl diphosphate from 1-deoxy-D-xylulose 5-phosphate: step 2/6. The protein operates within isoprenoid biosynthesis; isopentenyl diphosphate biosynthesis via DXP pathway; isopentenyl diphosphate from 1-deoxy-D-xylulose 5-phosphate: step 4/6. In terms of biological role, bifunctional enzyme that catalyzes the formation of 4-diphosphocytidyl-2-C-methyl-D-erythritol from CTP and 2-C-methyl-D-erythritol 4-phosphate (MEP) (IspD), and catalyzes the conversion of 4-diphosphocytidyl-2-C-methyl-D-erythritol 2-phosphate (CDP-ME2P) to 2-C-methyl-D-erythritol 2,4-cyclodiphosphate (ME-CPP) with a corresponding release of cytidine 5-monophosphate (CMP) (IspF). This is Bifunctional enzyme IspD/IspF from Nitrobacter winogradskyi (strain ATCC 25391 / DSM 10237 / CIP 104748 / NCIMB 11846 / Nb-255).